A 146-amino-acid chain; its full sequence is Holo-[acyl-carrier-protein] synthase (146 aa).

Mg(2+)-binding residues include aspartate 9 and glutamate 58.

The protein belongs to the P-Pant transferase superfamily. AcpS family. Requires Mg(2+) as cofactor.

It is found in the cytoplasm. The catalysed reaction is apo-[ACP] + CoA = holo-[ACP] + adenosine 3',5'-bisphosphate + H(+). Functionally, transfers the 4'-phosphopantetheine moiety from coenzyme A to a Ser of acyl-carrier-protein. The polypeptide is Holo-[acyl-carrier-protein] synthase (Baumannia cicadellinicola subsp. Homalodisca coagulata).